A 61-amino-acid chain; its full sequence is Metallothionein-1 (61 aa).

N-acetylmethionine is present on M1. A beta region spans residues 1-29; sequence MDPNCSCATGVSCTCADSCKCKECKCTSC. The a divalent metal cation site is built by C5, C7, C13, C15, C19, C21, C24, C26, C29, C33, C34, C36, C37, C41, C44, C48, C50, C57, C59, and C60. The tract at residues 30 to 61 is alpha; that stretch reads KKSCCSCCPVGCAKCAQGCVCKGASEKCNCCA.

This sequence belongs to the metallothionein superfamily. Type 1 family.

Its function is as follows. Metallothioneins have a high content of cysteine residues that bind various heavy metals; these proteins are transcriptionally regulated by both heavy metals and glucocorticoids. In Chlorocebus aethiops (Green monkey), this protein is Metallothionein-1 (MT1).